A 415-amino-acid chain; its full sequence is Vascular endothelial growth factor C (415 aa).

The signal sequence occupies residues 1–31 (MHLLCFLSLACSLLAAALIPSPREAPATVAA). A propeptide spanning residues 32–107 (FESGLGFSEA…RTGDSVKFAA (76 aa)) is cleaved from the precursor. 3 disulfide bridges follow: Cys127–Cys169, Cys158–Cys205, and Cys162–Cys207. N-linked (GlcNAc...) asparagine glycosylation is found at Asn171, Asn201, and Asn236. The propeptide occupies 224–415 (SLPATLPQCQ…PSYWKRPHLN (192 aa)). Repeat copies occupy residues 276–291 (CGPNKELDEDTCQCVC), 300–315 (CGPHKELDRDSCQCVC), 324–339 (CGANREFDENTCQCVC), and 343–358 (CPRNQPLNPGKCACEC). Residues 276-358 (CGPNKELDED…LNPGKCACEC (83 aa)) form a 4 X 16 AA repeats of C-X(10)-C-X-C-X(1,3)-C region.

The protein belongs to the PDGF/VEGF growth factor family. As to quaternary structure, homodimer; non-covalent and antiparallel. Interacts with FLT4/VEGFR3; the interaction is required for FLT4/VEGFR3 homodimarization and activation. Post-translationally, undergoes a complex proteolytic maturation which generates a variety of processed secreted forms with increased activity toward VEGFR-3, but only the fully processed form could activate VEGFR-2. VEGF-C first form an antiparallel homodimer linked by disulfide bonds. Before secretion, a cleavage occurs between Arg-223 and Ser-224 producing a heterotetramer. The next extracellular step of the processing removes the N-terminal propeptide. Finally the mature VEGF-C is composed mostly of two VEGF homology domains (VHDs) bound by non-covalent interactions. As to expression, expressed in adult heart, brain, spleen, lung, liver, skeletal muscle, kidney, testis and intestine with higher levels in heart, brain and kidney. Isoform 4 levels are very low. Isoform 3 is mostly expressed in liver and has reduced expression level in other tissues. Isoform 2 is mostly expressed in brain and kidney, although a lower level expression in other tissues is also detectable.

It localises to the secreted. Its function is as follows. Growth factor active in angiogenesis, and endothelial cell growth, stimulating their proliferation and migration and also has effects on the permeability of blood vessels. May function in angiogenesis of the venous and lymphatic vascular systems during embryogenesis, and also in the maintenance of differentiated lymphatic endothelium in adults. Binds and activates KDR/VEGFR2 and FLT4/VEGFR3 receptors. This is Vascular endothelial growth factor C (Vegfc) from Mus musculus (Mouse).